The following is a 389-amino-acid chain: MKFRQKHEDFIVNEILEYELNDYGNYFLYKLQKNGIENLKAISYLSKNFEVPTKEIGYCGLKDRHAITTQYVSIPKEYGKLSLDEDNLKLEYVGTIEKPLKIGRLYGNRFEIIARAVDKDEFLKIADNIRNLSSGAPNYYDDQRFGSVFNGKFIAKEILKGNYEEVVKILLTSYTKSEKKQLKDLKRFIAKNWGNWDECLEYIDKKQIRSKMFRNMVKSLTYENDFKKAFKYVDNRLKELFISAYQSYLWNECLKEFLKEVIPKENRIYVDYSCGTFLFYENIEEELFDKLKEMDFPTIVSDVEYTDPEKRIIKAILKKERIKISDFEKLDFGKLKYTKRPIISIPEDVNTGKFKSDELNSKKYKIDLEFSLKKGSYATIILKRVFNIL.

The active-site Nucleophile is Asp-63. In terms of domain architecture, TRUD spans Gly-135–Ile-345.

Belongs to the pseudouridine synthase TruD family.

It carries out the reaction uridine(13) in tRNA = pseudouridine(13) in tRNA. In terms of biological role, could be responsible for synthesis of pseudouridine from uracil-13 in transfer RNAs. This Methanococcus maripaludis (strain DSM 14266 / JCM 13030 / NBRC 101832 / S2 / LL) protein is Probable tRNA pseudouridine synthase D 1 (truD1).